We begin with the raw amino-acid sequence, 360 residues long: Membrane-bound lytic murein transglycosylase C (360 aa).

The first 16 residues, 1–16 (MKKYLALALIAPLLVS), serve as a signal peptide directing secretion. Cys-17 carries the N-palmitoyl cysteine lipid modification. Residue Cys-17 is the site of S-diacylglycerol cysteine attachment.

Belongs to the transglycosylase Slt family.

Its subcellular location is the cell outer membrane. It catalyses the reaction Exolytic cleavage of the (1-&gt;4)-beta-glycosidic linkage between N-acetylmuramic acid (MurNAc) and N-acetylglucosamine (GlcNAc) residues in peptidoglycan, from either the reducing or the non-reducing ends of the peptidoglycan chains, with concomitant formation of a 1,6-anhydrobond in the MurNAc residue.. Its function is as follows. Murein-degrading enzyme. May play a role in recycling of muropeptides during cell elongation and/or cell division. The protein is Membrane-bound lytic murein transglycosylase C of Klebsiella pneumoniae (strain 342).